A 473-amino-acid chain; its full sequence is Ribulose bisphosphate carboxylase large chain (473 aa).

A propeptide spanning residues 1–2 (MS) is cleaved from the precursor. Residues N123 and T173 each contribute to the substrate site. K175 functions as the Proton acceptor in the catalytic mechanism. A substrate-binding site is contributed by K177. K201, D203, and E204 together coordinate Mg(2+). At K201 the chain carries N6-carboxylysine. S208 is subject to Phosphoserine. The Proton acceptor role is filled by H294. The substrate site is built by R295 and H327. Residue T330 is modified to Phosphothreonine. S379 contacts substrate.

Belongs to the RuBisCO large chain family. Type I subfamily. Heterohexadecamer of 8 large chains and 8 small chains; disulfide-linked. The disulfide link is formed within the large subunit homodimers. Mg(2+) is required as a cofactor. The disulfide bond which can form in the large chain dimeric partners within the hexadecamer appears to be associated with oxidative stress and protein turnover.

The protein localises to the plastid. The protein resides in the chloroplast. It catalyses the reaction 2 (2R)-3-phosphoglycerate + 2 H(+) = D-ribulose 1,5-bisphosphate + CO2 + H2O. The enzyme catalyses D-ribulose 1,5-bisphosphate + O2 = 2-phosphoglycolate + (2R)-3-phosphoglycerate + 2 H(+). RuBisCO catalyzes two reactions: the carboxylation of D-ribulose 1,5-bisphosphate, the primary event in carbon dioxide fixation, as well as the oxidative fragmentation of the pentose substrate in the photorespiration process. Both reactions occur simultaneously and in competition at the same active site. This chain is Ribulose bisphosphate carboxylase large chain, found in Sinapis alba (White mustard).